A 349-amino-acid polypeptide reads, in one-letter code: Core protein VP7 (349 aa).

The N-linked (GlcNAc...) asparagine; by host glycan is linked to Asn-287.

It belongs to the orbivirus VP7 family. In terms of assembly, homotrimer that assemble in a complex of 260 capsomers on an inner scaffold composed of VP3.

It localises to the virion. In terms of biological role, the VP7 protein is one of the five proteins (with VP1, VP3, VP4, and VP6) which form the inner capsid of the virus. In Antilocapra americana (Pronghorn), this protein is Core protein VP7 (Segment-7).